Here is a 178-residue protein sequence, read N- to C-terminus: Large ribosomal subunit protein uL6 (178 aa).

It belongs to the universal ribosomal protein uL6 family. In terms of assembly, part of the 50S ribosomal subunit.

This protein binds to the 23S rRNA, and is important in its secondary structure. It is located near the subunit interface in the base of the L7/L12 stalk, and near the tRNA binding site of the peptidyltransferase center. The chain is Large ribosomal subunit protein uL6 from Listeria monocytogenes serotype 4a (strain HCC23).